The chain runs to 152 residues: Nucleoside diphosphate kinase A 2 (152 aa).

The ATP site is built by Lys12, Phe60, Arg88, Thr94, Arg105, and Asn115. Residue His118 is the Pros-phosphohistidine intermediate of the active site.

The protein belongs to the NDK family. Homohexamer. Mg(2+) is required as a cofactor. In terms of processing, the N-terminus is blocked.

It localises to the cytoplasm. The protein localises to the cell membrane. It is found in the nucleus. The enzyme catalyses a 2'-deoxyribonucleoside 5'-diphosphate + ATP = a 2'-deoxyribonucleoside 5'-triphosphate + ADP. It carries out the reaction a ribonucleoside 5'-diphosphate + ATP = a ribonucleoside 5'-triphosphate + ADP. Its activity is regulated as follows. Autophosphorylation at His-118 increases serine/threonine protein kinase activity of the enzyme. Interaction with the SET complex inhibits exonuclease activity. In terms of biological role, major role in the synthesis of nucleoside triphosphates other than ATP. Possesses nucleoside-diphosphate kinase, serine/threonine-specific protein kinase, geranyl and farnesyl pyrophosphate kinase, histidine protein kinase and 3'-5' exonuclease activities. Involved in cell proliferation, differentiation and development, signal transduction, G protein-coupled receptor endocytosis, and gene expression. Required for neural development including neural patterning and cell fate determination. This chain is Nucleoside diphosphate kinase A 2 (NME1-2), found in Bos taurus (Bovine).